Here is a 416-residue protein sequence, read N- to C-terminus: UDP-N-acetylglucosamine 1-carboxyvinyltransferase (416 aa).

Phosphoenolpyruvate is bound at residue 22-23; the sequence is KN. Residue arginine 91 participates in UDP-N-acetyl-alpha-D-glucosamine binding. Cysteine 115 functions as the Proton donor in the catalytic mechanism. A 2-(S-cysteinyl)pyruvic acid O-phosphothioketal modification is found at cysteine 115. Residues aspartate 304 and isoleucine 326 each contribute to the UDP-N-acetyl-alpha-D-glucosamine site.

Belongs to the EPSP synthase family. MurA subfamily.

The protein resides in the cytoplasm. It catalyses the reaction phosphoenolpyruvate + UDP-N-acetyl-alpha-D-glucosamine = UDP-N-acetyl-3-O-(1-carboxyvinyl)-alpha-D-glucosamine + phosphate. The protein operates within cell wall biogenesis; peptidoglycan biosynthesis. In terms of biological role, cell wall formation. Adds enolpyruvyl to UDP-N-acetylglucosamine. In Thermodesulfovibrio yellowstonii (strain ATCC 51303 / DSM 11347 / YP87), this protein is UDP-N-acetylglucosamine 1-carboxyvinyltransferase.